The chain runs to 217 residues: Pyridoxine/pyridoxamine 5'-phosphate oxidase (217 aa).

Substrate is bound by residues 13 to 16 (RREY) and Lys71. Residues 66–71 (RIVLLK), 81–82 (YT), Arg87, Lys88, and Gln110 contribute to the FMN site. 3 residues coordinate substrate: Tyr128, Arg132, and Ser136. Residues 145 to 146 (QS) and Trp190 each bind FMN. 196 to 198 (RLH) serves as a coordination point for substrate. Position 200 (Arg200) interacts with FMN.

It belongs to the pyridoxamine 5'-phosphate oxidase family. As to quaternary structure, homodimer. The cofactor is FMN.

The enzyme catalyses pyridoxamine 5'-phosphate + O2 + H2O = pyridoxal 5'-phosphate + H2O2 + NH4(+). The catalysed reaction is pyridoxine 5'-phosphate + O2 = pyridoxal 5'-phosphate + H2O2. It functions in the pathway cofactor metabolism; pyridoxal 5'-phosphate salvage; pyridoxal 5'-phosphate from pyridoxamine 5'-phosphate: step 1/1. It participates in cofactor metabolism; pyridoxal 5'-phosphate salvage; pyridoxal 5'-phosphate from pyridoxine 5'-phosphate: step 1/1. Functionally, catalyzes the oxidation of either pyridoxine 5'-phosphate (PNP) or pyridoxamine 5'-phosphate (PMP) into pyridoxal 5'-phosphate (PLP). The chain is Pyridoxine/pyridoxamine 5'-phosphate oxidase from Photorhabdus laumondii subsp. laumondii (strain DSM 15139 / CIP 105565 / TT01) (Photorhabdus luminescens subsp. laumondii).